Here is a 317-residue protein sequence, read N- to C-terminus: Flagellar hook-associated protein 3 (317 aa).

Belongs to the bacterial flagellin family.

Its subcellular location is the secreted. The protein localises to the bacterial flagellum. In Escherichia coli (strain K12), this protein is Flagellar hook-associated protein 3 (flgL).